The chain runs to 88 residues: Small ribosomal subunit protein uS17 (88 aa).

It belongs to the universal ribosomal protein uS17 family. As to quaternary structure, part of the 30S ribosomal subunit.

Functionally, one of the primary rRNA binding proteins, it binds specifically to the 5'-end of 16S ribosomal RNA. This chain is Small ribosomal subunit protein uS17, found in Pseudomonas savastanoi pv. phaseolicola (strain 1448A / Race 6) (Pseudomonas syringae pv. phaseolicola (strain 1448A / Race 6)).